We begin with the raw amino-acid sequence, 109 residues long: UPF0482 protein ESA_01750 (109 aa).

The signal sequence occupies residues methionine 1–alanine 24. The span at arginine 38–serine 55 shows a compositional bias: basic and acidic residues. Residues arginine 38–arginine 63 are disordered.

It belongs to the UPF0482 family.

The polypeptide is UPF0482 protein ESA_01750 (Cronobacter sakazakii (strain ATCC BAA-894) (Enterobacter sakazakii)).